The primary structure comprises 492 residues: Monocarboxylate transporter 3 (492 aa).

At 1–14 (MGAGGPRRGAGPPD) the chain is on the cytoplasmic side. Residues 15–35 (GGWGWVVLGACFVVTGFAYGF) traverse the membrane as a helical segment. Residues 36–58 (PKAVSVFFRELKRDFGAGYSDTA) lie on the Extracellular side of the membrane. A helical membrane pass occupies residues 59-79 (WVSSIMLAMLYGTGPLSSILV). Residues 80–85 (TRFGCR) are Cytoplasmic-facing. A helical membrane pass occupies residues 86-106 (PVMLAGGLLASAGMILASFAS). The Extracellular segment spans residues 107-115 (RLVELYLTA). Residues 116 to 136 (GVLTGLGLALNFQPSLIMLGL) traverse the membrane as a helical segment. At 137 to 146 (YFERRRPLAN) the chain is on the cytoplasmic side. Residues 147–167 (GLAAAGSPVFLSMLSPLGQLL) traverse the membrane as a helical segment. Topologically, residues 168–172 (GERFG) are extracellular. Residues 173–193 (WRGGFLLFGGLLLHCCACGAV) traverse the membrane as a helical segment. At 194 to 228 (MRPPPGPPPRRDPSPHGGPARRRRLLDVAVCTDRA) the chain is on the cytoplasmic side. Residues 229–249 (FVVYVVTKFLMALGLFVPAIL) traverse the membrane as a helical segment. At 250 to 257 (LVNYAKDA) the chain is on the extracellular side. The helical transmembrane segment at 258 to 278 (GVPDAEAAFLLSIVGFVDIVA) threads the bilayer. The Cytoplasmic portion of the chain corresponds to 279–293 (RPACGALAGLGRLRP). Residues 294-314 (HVPYLFSLALLANGLTDLISA) traverse the membrane as a helical segment. Residues 315–318 (RARS) lie on the Extracellular side of the membrane. A helical transmembrane segment spans residues 319 to 339 (YGTLVAFCIAFGLSYGMVGAL). The Cytoplasmic segment spans residues 340-352 (QFEVLMATVGAPR). A helical transmembrane segment spans residues 353 to 373 (FPSALGLVLLVEAVAVLIGPP). Residues 374–386 (SAGRLVDALKNYE) lie on the Extracellular side of the membrane. A helical transmembrane segment spans residues 387-407 (IIFYLAGSEVALAGVFMAVTT). Topologically, residues 408-492 (YCCLRCSKNI…GGHEARGQKA (85 aa)) are cytoplasmic. The tract at residues 419-492 (SGRSAEGGAS…GGHEARGQKA (74 aa)) is disordered. Basolateral sorting signal regions lie at residues 426–460 (GASD…VLSP) and 461–482 (RAGS…HESI). Residues 476–492 (ELDHESIGGHEARGQKA) show a composition bias toward basic and acidic residues.

It belongs to the major facilitator superfamily. Monocarboxylate porter (TC 2.A.1.13) family. Expressed exclusively in retinal pigment epithelium and choroid plexus epithelium.

It is found in the basolateral cell membrane. It catalyses the reaction (S)-lactate(in) + H(+)(in) = (S)-lactate(out) + H(+)(out). In terms of biological role, probable retinal pigment epithelium (RPE)-specific proton-coupled L-lactate transporter. May facilitate transport of lactate and H(+) out of the retina and could therefore play an essential role in maintenance of metabolic and ionic homeostasis of the outer retina. The polypeptide is Monocarboxylate transporter 3 (Slc16a8) (Mus musculus (Mouse)).